Here is a 625-residue protein sequence, read N- to C-terminus: Chaperone protein HtpG (625 aa).

Residues 1-332 (MSKKTNAPVQ…TEDLSLNVSR (332 aa)) form an a; substrate-binding region. The interval 333 to 545 (EVVQSSPVMA…KDAMDSQMER (213 aa)) is b. Positions 546-625 (MMKMMQQEMP…ELIEAATLSR (80 aa)) are c.

This sequence belongs to the heat shock protein 90 family. In terms of assembly, homodimer.

The protein resides in the cytoplasm. In terms of biological role, molecular chaperone. Has ATPase activity. The polypeptide is Chaperone protein HtpG (Chlorobium phaeovibrioides (strain DSM 265 / 1930) (Prosthecochloris vibrioformis (strain DSM 265))).